Consider the following 497-residue polypeptide: Cytochrome P450 monooxygenase 151 (497 aa).

The helical transmembrane segment at 1-21 (MTDLVPVYYAFAGVVAALLFY) threads the bilayer. Asn292 and Asn397 each carry an N-linked (GlcNAc...) asparagine glycan. Cys441 provides a ligand contact to heme.

This sequence belongs to the cytochrome P450 family. It depends on heme as a cofactor.

It localises to the membrane. It functions in the pathway secondary metabolite biosynthesis. Its function is as follows. Cytochrome P450 monooxygenase that is able to use dehydroabietic acid and testosterone as substrates for oxidation, suggesting that the natural substrate(s) may be structurally related to steroid compounds. The chain is Cytochrome P450 monooxygenase 151 from Postia placenta (strain ATCC 44394 / Madison 698-R) (Brown rot fungus).